The following is a 155-amino-acid chain: Small ribosomal subunit protein uS7cz/uS7cy (155 aa).

Belongs to the universal ribosomal protein uS7 family. Part of the 30S ribosomal subunit.

The protein localises to the plastid. It is found in the chloroplast. In terms of biological role, one of the primary rRNA binding proteins, it binds directly to 16S rRNA where it nucleates assembly of the head domain of the 30S subunit. The polypeptide is Small ribosomal subunit protein uS7cz/uS7cy (rps7-A) (Chloranthus spicatus (Chulantree)).